A 328-amino-acid polypeptide reads, in one-letter code: UPF0194 membrane protein YE2891 (328 aa).

A signal peptide spans 1 to 22 (MNRKKIIVAVVIVALLAAIGYG). 2 coiled-coil regions span residues 80–109 (YVNA…REEE) and 139–208 (ANKA…TTLL).

This sequence belongs to the UPF0194 family.

Its subcellular location is the periplasm. In Yersinia enterocolitica serotype O:8 / biotype 1B (strain NCTC 13174 / 8081), this protein is UPF0194 membrane protein YE2891.